Here is a 120-residue protein sequence, read N- to C-terminus: Large ribosomal subunit protein uL14 (120 aa).

This sequence belongs to the universal ribosomal protein uL14 family. In terms of assembly, part of the 50S ribosomal subunit. Forms a cluster with proteins L3 and L19. In the 70S ribosome, L14 and L19 interact and together make contacts with the 16S rRNA in bridges B5 and B8.

Its function is as follows. Binds to 23S rRNA. Forms part of two intersubunit bridges in the 70S ribosome. This chain is Large ribosomal subunit protein uL14, found in Dictyoglomus thermophilum (strain ATCC 35947 / DSM 3960 / H-6-12).